Here is a 226-residue protein sequence, read N- to C-terminus: Thiamine-phosphate synthase (226 aa).

4-amino-2-methyl-5-(diphosphooxymethyl)pyrimidine-binding positions include 46 to 50 (QFRDK) and D83. Positions 84 and 103 each coordinate Mg(2+). Residue S122 coordinates 4-amino-2-methyl-5-(diphosphooxymethyl)pyrimidine. 149 to 151 (TQS) serves as a coordination point for 2-[(2R,5Z)-2-carboxy-4-methylthiazol-5(2H)-ylidene]ethyl phosphate. K152 contributes to the 4-amino-2-methyl-5-(diphosphooxymethyl)pyrimidine binding site. Residues G181 and 201–202 (IT) each bind 2-[(2R,5Z)-2-carboxy-4-methylthiazol-5(2H)-ylidene]ethyl phosphate.

This sequence belongs to the thiamine-phosphate synthase family. The cofactor is Mg(2+).

It catalyses the reaction 2-[(2R,5Z)-2-carboxy-4-methylthiazol-5(2H)-ylidene]ethyl phosphate + 4-amino-2-methyl-5-(diphosphooxymethyl)pyrimidine + 2 H(+) = thiamine phosphate + CO2 + diphosphate. It carries out the reaction 2-(2-carboxy-4-methylthiazol-5-yl)ethyl phosphate + 4-amino-2-methyl-5-(diphosphooxymethyl)pyrimidine + 2 H(+) = thiamine phosphate + CO2 + diphosphate. The catalysed reaction is 4-methyl-5-(2-phosphooxyethyl)-thiazole + 4-amino-2-methyl-5-(diphosphooxymethyl)pyrimidine + H(+) = thiamine phosphate + diphosphate. It participates in cofactor biosynthesis; thiamine diphosphate biosynthesis; thiamine phosphate from 4-amino-2-methyl-5-diphosphomethylpyrimidine and 4-methyl-5-(2-phosphoethyl)-thiazole: step 1/1. In terms of biological role, condenses 4-methyl-5-(beta-hydroxyethyl)thiazole monophosphate (THZ-P) and 2-methyl-4-amino-5-hydroxymethyl pyrimidine pyrophosphate (HMP-PP) to form thiamine monophosphate (TMP). The chain is Thiamine-phosphate synthase from Haemophilus influenzae (strain PittGG).